A 785-amino-acid polypeptide reads, in one-letter code: AP-1 complex subunit gamma-like 2 (785 aa).

The essential for ubiquitin-binding stretch occupies residues 369-379 (LSLALVNSSNV). A disordered region spans residues 592–617 (GPQADEEAKESKEAAQLSEAAPVPTE). The GAE domain maps to 665–780 (APIPDLKVFE…QEIFEVNNLP (116 aa)).

The protein belongs to the adaptor complexes large subunit family. In terms of assembly, may interact with AP1S1/Sigma1A-adaptin and AP1S2/Sigma1B-adaptin. Probably does not interact with APB1. Interacts (via GAE domain) with RABEP1, NECAP1, CLINT1 and AFTPH/aftiphilin. (Microbial infection) Interacts with HBV major surface antigen L. Interacts with HBV core protein C in a ubiquitin-dependent manner. Expressed in all but one (skeletal muscle) tissues examined.

It localises to the golgi apparatus membrane. The protein resides in the cytoplasmic vesicle membrane. It is found in the endosome membrane. Its function is as follows. May function in protein sorting in late endosomes or multivesucular bodies (MVBs). (Microbial infection) Involved in MVB-assisted maturation of hepatitis B virus (HBV). The chain is AP-1 complex subunit gamma-like 2 (AP1G2) from Homo sapiens (Human).